A 78-amino-acid chain; its full sequence is Small ribosomal subunit protein bS18 (78 aa).

This sequence belongs to the bacterial ribosomal protein bS18 family. As to quaternary structure, part of the 30S ribosomal subunit. Forms a tight heterodimer with protein bS6.

In terms of biological role, binds as a heterodimer with protein bS6 to the central domain of the 16S rRNA, where it helps stabilize the platform of the 30S subunit. This chain is Small ribosomal subunit protein bS18, found in Parafrankia sp. (strain EAN1pec).